A 244-amino-acid chain; its full sequence is UPF0280 protein MJ1526 (244 aa).

This sequence belongs to the UPF0280 family.

This chain is UPF0280 protein MJ1526, found in Methanocaldococcus jannaschii (strain ATCC 43067 / DSM 2661 / JAL-1 / JCM 10045 / NBRC 100440) (Methanococcus jannaschii).